The primary structure comprises 240 residues: Protein CDV3 homolog A (240 aa).

The span at 1 to 15 shows a compositional bias: basic and acidic residues; it reads MAEPQEKSLDDFFAK. Positions 1–204 are disordered; it reads MAEPQEKSLD…TESRREKEME (204 aa). N-acetylalanine is present on A2. Residues 27 to 52 are compositionally biased toward low complexity; sequence SGSAAGSRGSARPPDGAPSSSSSMSG. The span at 57–73 shows a compositional bias: basic and acidic residues; sequence VKKEKSGKSDNPDQLQE. Composition is skewed to polar residues over residues 127–141 and 181–192; these read DKSSGPWNKTSQAQA and SDTQFPSLQATA. A compositionally biased stretch (basic and acidic residues) spans 193–204; it reads KHTESRREKEME.

This sequence belongs to the CDV3 family.

Its subcellular location is the cytoplasm. The protein is Protein CDV3 homolog A (cdv3-a) of Xenopus laevis (African clawed frog).